We begin with the raw amino-acid sequence, 1161 residues long: ATP-dependent helicase/deoxyribonuclease subunit B (1161 aa).

It belongs to the helicase family. AddB/RexB type 2 subfamily. In terms of assembly, heterodimer of AddA and RexB. It depends on Mg(2+) as a cofactor.

Its function is as follows. The heterodimer acts as both an ATP-dependent DNA helicase and an ATP-dependent, dual-direction single-stranded exonuclease. Recognizes the chi site generating a DNA molecule suitable for the initiation of homologous recombination. This subunit has 5' -&gt; 3' nuclease activity but not helicase activity. The polypeptide is ATP-dependent helicase/deoxyribonuclease subunit B (Oenococcus oeni (strain ATCC BAA-331 / PSU-1)).